We begin with the raw amino-acid sequence, 585 residues long: Protein FAM83D (585 aa).

Positions 1 to 296 (MAARFELLDD…LYAQSEPISS (296 aa)) are DUF1669. Ser-295 is subject to Phosphoserine. 2 disordered regions span residues 334 to 411 (LSST…TSSS) and 425 to 482 (AASS…SQGS). Residues 337–585 (TPRKSNLGPE…RDIALYPPYQ (249 aa)) are required for interaction with KIF22 and function in chromosome congression. Composition is skewed to basic and acidic residues over residues 347–360 (EPPK…RPDS) and 369–383 (DYFH…DSKV). The span at 425–441 (AASSQATVWSKSTTTQT) shows a compositional bias: polar residues. Ser-458 is modified (phosphoserine). The span at 458–482 (SPASKMSVSRSSSVRSSSSVSSQGS) shows a compositional bias: low complexity. A Phosphothreonine modification is found at Thr-511.

The protein belongs to the FAM83 family. In terms of assembly, interacts with FBXW7; promotes FBXW7 degradation. May interact with RAF1. Interacts with KIF22; recruits KIF22 to mitotic spindle microtubules. Interacts (via C-terminus) with DYNLL1. Interacts with HMMR. Directly interacts (via DUF1669) with CSNK1A1 and CSNK1A1L. Post-translationally, phosphorylated during mitosis.

It localises to the cytoplasm. It is found in the cytoskeleton. The protein localises to the spindle. Its subcellular location is the spindle pole. Functionally, through the degradation of FBXW7, may act indirectly on the expression and downstream signaling of MTOR, JUN and MYC. May play also a role in cell proliferation through activation of the ERK1/ERK2 signaling cascade. May also be important for proper chromosome congression and alignment during mitosis through its interaction with KIF22. The protein is Protein FAM83D of Mus musculus (Mouse).